Reading from the N-terminus, the 173-residue chain is MSMSANTMIFMILGASVVMAIACLMDMNALLDRFHNYILPHLRGEDRVCHCNCGRHHIHYVIPYDGDQSVVDASENYFVTDSVTKQEIDLMLGLLLGFCISWFLVWMDGVLHCAVRAWRAGRRYDGSWTWLPKLCSLRELGRRPHRPFEEAAGNMVHVKQKLYHNGHPSPRHL.

The next 2 helical transmembrane spans lie at 5–25 (ANTM…ACLM) and 90–110 (LMLG…MDGV). Residue Ser-169 is modified to Phosphoserine.

Belongs to the TMEM240 family.

It is found in the synapse. The protein localises to the cell membrane. This chain is Transmembrane protein 240 (TMEM240), found in Homo sapiens (Human).